A 445-amino-acid chain; its full sequence is Probable aminotransferase TAT3 (445 aa).

This sequence belongs to the class-I pyridoxal-phosphate-dependent aminotransferase family. Pyridoxal 5'-phosphate is required as a cofactor. As to expression, expressed in roots, leaves and cauline leaves.

This Arabidopsis thaliana (Mouse-ear cress) protein is Probable aminotransferase TAT3 (TAT3).